We begin with the raw amino-acid sequence, 350 residues long: Biotin synthase (350 aa).

In terms of domain architecture, Radical SAM core spans 41–268; it reads NEVQISRLLS…LSRVRLSAGR (228 aa). [4Fe-4S] cluster is bound by residues Cys56, Cys60, and Cys63. 4 residues coordinate [2Fe-2S] cluster: Cys100, Cys131, Cys191, and Arg263.

Belongs to the radical SAM superfamily. Biotin synthase family. As to quaternary structure, homodimer. [4Fe-4S] cluster is required as a cofactor. The cofactor is [2Fe-2S] cluster.

The enzyme catalyses (4R,5S)-dethiobiotin + (sulfur carrier)-SH + 2 reduced [2Fe-2S]-[ferredoxin] + 2 S-adenosyl-L-methionine = (sulfur carrier)-H + biotin + 2 5'-deoxyadenosine + 2 L-methionine + 2 oxidized [2Fe-2S]-[ferredoxin]. The protein operates within cofactor biosynthesis; biotin biosynthesis; biotin from 7,8-diaminononanoate: step 2/2. Functionally, catalyzes the conversion of dethiobiotin (DTB) to biotin by the insertion of a sulfur atom into dethiobiotin via a radical-based mechanism. This Shewanella oneidensis (strain ATCC 700550 / JCM 31522 / CIP 106686 / LMG 19005 / NCIMB 14063 / MR-1) protein is Biotin synthase.